A 374-amino-acid chain; its full sequence is Chaperone protein DnaJ (374 aa).

The J domain maps to 5-70 (DYYEVLGVAK…QKRAAYDRYG (66 aa)). The CR-type zinc finger occupies 134-212 (GFDTEIRVPS…CDGVGRIRRN (79 aa)). 8 residues coordinate Zn(2+): cysteine 147, cysteine 150, cysteine 164, cysteine 167, cysteine 186, cysteine 189, cysteine 200, and cysteine 203. CXXCXGXG motif repeat units lie at residues 147 to 154 (CDTCHGSG), 164 to 171 (CRTCGGSG), 186 to 193 (CPTCHGTG), and 200 to 207 (CPSCDGVG).

This sequence belongs to the DnaJ family. Homodimer. The cofactor is Zn(2+).

Its subcellular location is the cytoplasm. Participates actively in the response to hyperosmotic and heat shock by preventing the aggregation of stress-denatured proteins and by disaggregating proteins, also in an autonomous, DnaK-independent fashion. Unfolded proteins bind initially to DnaJ; upon interaction with the DnaJ-bound protein, DnaK hydrolyzes its bound ATP, resulting in the formation of a stable complex. GrpE releases ADP from DnaK; ATP binding to DnaK triggers the release of the substrate protein, thus completing the reaction cycle. Several rounds of ATP-dependent interactions between DnaJ, DnaK and GrpE are required for fully efficient folding. Also involved, together with DnaK and GrpE, in the DNA replication of plasmids through activation of initiation proteins. This Bordetella petrii (strain ATCC BAA-461 / DSM 12804 / CCUG 43448) protein is Chaperone protein DnaJ.